The chain runs to 176 residues: Peptide methionine sulfoxide reductase MsrA (176 aa).

Residue Cys-10 is part of the active site.

This sequence belongs to the MsrA Met sulfoxide reductase family.

It catalyses the reaction L-methionyl-[protein] + [thioredoxin]-disulfide + H2O = L-methionyl-(S)-S-oxide-[protein] + [thioredoxin]-dithiol. The catalysed reaction is [thioredoxin]-disulfide + L-methionine + H2O = L-methionine (S)-S-oxide + [thioredoxin]-dithiol. In terms of biological role, has an important function as a repair enzyme for proteins that have been inactivated by oxidation. Catalyzes the reversible oxidation-reduction of methionine sulfoxide in proteins to methionine. This chain is Peptide methionine sulfoxide reductase MsrA, found in Leptospira borgpetersenii serovar Hardjo-bovis (strain JB197).